The following is a 757-amino-acid chain: Palmitoyltransferase AKR1 (757 aa).

Composition is skewed to polar residues over residues 1–20 (MSDI…STDP) and 36–46 (ESISSLQPIVS). A disordered region spans residues 1-54 (MSDINTESGESTSLPNSTDPPLSDVNIDVEDDDTAESISSLQPIVSNTTNPPEE). At 1–307 (MSDINTESGE…KLFKKSDHAK (307 aa)) the chain is on the cytoplasmic side. ANK repeat units lie at residues 58–88 (PVLG…DLNT), 92–121 (GDIT…DVNA), 126–155 (LEAT…DPTM), 159–188 (QGFN…AKGI), 197–226 (KGRT…STKI), and 230–259 (GGFT…DFFL). The helical transmembrane segment at 308-328 (VITFFVPLVALSIIFILFTHL) threads the bilayer. The Lumenal portion of the chain corresponds to 329–331 (HPL). The helical transmembrane segment at 332–352 (FALLISLIFGLAVNKALKELI) threads the bilayer. Residues 353–375 (LPSYSNYGLHSTSLLKSPFLSGT) lie on the Cytoplasmic side of the membrane. The chain crosses the membrane as a helical span at residues 376 to 396 (FFGSLLLLTIVWIFKIAPFTI). Topologically, residues 397 to 402 (FKSRLL) are lumenal. A helical membrane pass occupies residues 403–423 (TNFFMFLILMQIYYLFIKLIF). The Cytoplasmic segment spans residues 424–498 (SDPGCVPIET…YNDIGLKNHK (75 aa)). The 51-residue stretch at 455 to 505 (NFCLETWIRKPLRSHFSTLNTHNVARFDHFCPWIYNDIGLKNHKNFMWFIL) folds into the DHHC domain. Cysteine 485 (S-palmitoyl cysteine intermediate) is an active-site residue. A helical transmembrane segment spans residues 499–519 (NFMWFILLTEVGIWFFISLTM). At 520-550 (KYFDILEDTNEDVACFLLGDDELCAGFVYDR) the chain is on the lumenal side. The chain crosses the membrane as a helical span at residues 551–571 (FTFLIALWALIQSVWVGFLIV). Residues 572-757 (VQVFQTFTGV…YPEPTGPESV (186 aa)) lie on the Cytoplasmic side of the membrane. Residues 614 to 647 (ELRNDDDDTAASRTGNNPNHSNGTTIPSEGSRIN) are disordered. Residues 624–646 (ASRTGNNPNHSNGTTIPSEGSRI) are compositionally biased toward polar residues.

The protein belongs to the DHHC palmitoyltransferase family. AKR/ZDHHC17 subfamily.

The protein resides in the early endosome membrane. Its subcellular location is the golgi apparatus membrane. It carries out the reaction L-cysteinyl-[protein] + hexadecanoyl-CoA = S-hexadecanoyl-L-cysteinyl-[protein] + CoA. Functionally, palmitoyltransferase specific for casein kinase 1. The protein is Palmitoyltransferase AKR1 (AKR1) of Naumovozyma castellii (Yeast).